The following is a 349-amino-acid chain: Cell adhesion molecule CEACAM8 (349 aa).

A signal peptide spans 1–34; the sequence is MGPISAPSCRWRIPWQGLLLTASLFTFWNPPTTA. An Ig-like V-type domain is found at 35–142; sequence QLTIEAVPSN…EVTGQFSVHP (108 aa). Residues asparagine 104, asparagine 111, asparagine 115, asparagine 152, asparagine 173, asparagine 197, asparagine 224, asparagine 256, asparagine 274, asparagine 288, and asparagine 309 are each glycosylated (N-linked (GlcNAc...) asparagine). Ig-like C2-type domains lie at 145-232 and 237-319; these read PKPS…VTLN and PDAP…ITVS. An intrachain disulfide couples cysteine 167 to cysteine 215. Cysteine 259 and cysteine 299 are joined by a disulfide. Aspartate 320 is lipidated: GPI-anchor amidated aspartate. A propeptide spans 321-349 (removed in mature form); that stretch reads ALVQGSSPGLSARATVSIMIGVLARVALI.

The protein belongs to the immunoglobulin superfamily. CEA family. In terms of assembly, monomer. Heterodimer with CEACAM6; heterodimerizes via its Ig-like V-type domain. Glycosylated. As to expression, expressed in leukocytes of chronic myeloid Leukemia patients and bone marrow.

Its subcellular location is the cell membrane. It is found in the cell surface. Functionally, cell surface glycoprotein that plays a role in cell adhesion in a calcium-independent manner. Mediates heterophilic cell adhesion with other carcinoembryonic antigen-related cell adhesion molecules, such as CEACAM6. Heterophilic interaction with CEACAM8 occurs in activated neutrophils. This Homo sapiens (Human) protein is Cell adhesion molecule CEACAM8.